A 385-amino-acid chain; its full sequence is S-adenosylmethionine synthase (385 aa).

Position 16 (H16) interacts with ATP. Position 18 (D18) interacts with Mg(2+). Residue E44 participates in K(+) binding. L-methionine-binding residues include E57 and Q100. Positions 100-110 (QSPDINQGVDR) are flexible loop. ATP is bound by residues 164 to 166 (DGK), 230 to 231 (KF), D239, 245 to 246 (RK), A262, and K266. D239 serves as a coordination point for L-methionine. K270 lines the L-methionine pocket.

It belongs to the AdoMet synthase family. As to quaternary structure, homotetramer; dimer of dimers. Requires Mg(2+) as cofactor. K(+) serves as cofactor.

The protein localises to the cytoplasm. It catalyses the reaction L-methionine + ATP + H2O = S-adenosyl-L-methionine + phosphate + diphosphate. It participates in amino-acid biosynthesis; S-adenosyl-L-methionine biosynthesis; S-adenosyl-L-methionine from L-methionine: step 1/1. Functionally, catalyzes the formation of S-adenosylmethionine (AdoMet) from methionine and ATP. The overall synthetic reaction is composed of two sequential steps, AdoMet formation and the subsequent tripolyphosphate hydrolysis which occurs prior to release of AdoMet from the enzyme. This Helicobacter pylori (strain HPAG1) protein is S-adenosylmethionine synthase.